Consider the following 453-residue polypeptide: Probable glycine dehydrogenase (decarboxylating) subunit 1 (453 aa).

The protein belongs to the GcvP family. N-terminal subunit subfamily. As to quaternary structure, the glycine cleavage system is composed of four proteins: P, T, L and H. In this organism, the P 'protein' is a heterodimer of two subunits.

It carries out the reaction N(6)-[(R)-lipoyl]-L-lysyl-[glycine-cleavage complex H protein] + glycine + H(+) = N(6)-[(R)-S(8)-aminomethyldihydrolipoyl]-L-lysyl-[glycine-cleavage complex H protein] + CO2. In terms of biological role, the glycine cleavage system catalyzes the degradation of glycine. The P protein binds the alpha-amino group of glycine through its pyridoxal phosphate cofactor; CO(2) is released and the remaining methylamine moiety is then transferred to the lipoamide cofactor of the H protein. In Caulobacter sp. (strain K31), this protein is Probable glycine dehydrogenase (decarboxylating) subunit 1.